Consider the following 99-residue polypeptide: MSHNHEQEHDLITLVDEQGNETLFEVLLTIDGKEEFGKNYVLLVPAGAEEDADGQIEIQAYSFTENEDGTEGALQPIPEDADAEWIMIEEVFNSFLDED.

The protein belongs to the UPF0473 family.

This chain is UPF0473 protein SMU_2077c, found in Streptococcus mutans serotype c (strain ATCC 700610 / UA159).